The following is an 89-amino-acid chain: Small ribosomal subunit protein uS17 (89 aa).

It belongs to the universal ribosomal protein uS17 family. As to quaternary structure, part of the 30S ribosomal subunit.

Functionally, one of the primary rRNA binding proteins, it binds specifically to the 5'-end of 16S ribosomal RNA. The polypeptide is Small ribosomal subunit protein uS17 (Aromatoleum aromaticum (strain DSM 19018 / LMG 30748 / EbN1) (Azoarcus sp. (strain EbN1))).